Here is a 1695-residue protein sequence, read N- to C-terminus: Sialoadhesin (1695 aa).

The N-terminal stretch at 1 to 19 (MCVLFSLLLLASVFSLGQT) is a signal peptide. The Ig-like V-type domain occupies 20 to 136 (TWGVSSPKNV…DVKGTTVTVT (117 aa)). At 20 to 1639 (TWGVSSPKNV…ALHQLQLFQR (1620 aa)) the chain is on the extracellular side. Cystine bridges form between Cys36–Cys166, Cys41–Cys98, Cys160–Cys218, and Cys263–Cys306. Residues Tyr63, Arg116, and 122 to 126 (SNRWL) contribute to the N-acetylneuraminate site. 16 Ig-like C2-type domains span residues 153-235 (GMER…YLQV), 239-321 (PKGV…SPLS), 326-406 (MAEV…SPLS), 416-508 (PDLT…LDFY), 509-594 (ANVA…TVLT), 602-701 (PTFT…ASFN), 704-781 (ATVL…AQLS), 795-890 (PKLS…FQVR), 894-973 (VQVS…APVS), 980-1079 (PRHV…ADFD), 1081-1161 (QAVR…RPVT), 1172-1264 (RLTY…MNPS), 1245-1337 (KANT…ASLQ), 1342-1439 (PRDA…RLLT), 1442-1520 (DIRV…ATTS), and 1534-1627 (PTLI…AYFG). Asn159 carries N-linked (GlcNAc...) asparagine glycosylation. 3 N-linked (GlcNAc...) asparagine glycosylation sites follow: Asn266, Asn299, and Asn340. 2 disulfide bridges follow: Cys347–Cys391 and Cys434–Cys492. Asn500 carries an N-linked (GlcNAc...) asparagine glycan. Residues Cys532 and Cys576 are joined by a disulfide bond. Asn583 carries an N-linked (GlcNAc...) asparagine glycan. The cysteines at positions 625 and 685 are disulfide-linked. Residues Asn693, Asn722, and Asn737 are each glycosylated (N-linked (GlcNAc...) asparagine). 2 cysteine pairs are disulfide-bonded: Cys725–Cys770 and Cys813–Cys872. The Cell attachment site motif lies at 827–829 (RGD). N-linked (GlcNAc...) asparagine glycosylation is present at Asn882. Disulfide bonds link Cys912-Cys956 and Cys1001-Cys1063. 2 N-linked (GlcNAc...) asparagine glycosylation sites follow: Asn1090 and Asn1100. 2 cysteine pairs are disulfide-bonded: Cys1103/Cys1145 and Cys1189/Cys1237. Asn1247 is a glycosylation site (N-linked (GlcNAc...) asparagine). 2 disulfide bridges follow: Cys1277-Cys1320 and Cys1363-Cys1422. 2 N-linked (GlcNAc...) asparagine glycosylation sites follow: Asn1460 and Asn1474. 2 disulfide bridges follow: Cys1463–Cys1509 and Cys1552–Cys1611. A helical transmembrane segment spans residues 1640–1660 (LLWVLGFLAGFLCLLLGLVAY). Residues 1661-1695 (HTWRKKSSTKLNEDENSAEMATKKNTIQEEVVAAL) are Cytoplasmic-facing.

It belongs to the immunoglobulin superfamily. SIGLEC (sialic acid binding Ig-like lectin) family. Interacts with CLEC10A. Detected in lymph node in the subcapsular sinus, interfollicular regions, and T and B-cell boundary (at protein level). Expressed by macrophages in various tissues. Highest expression in spleen and lymph node with lower amounts in lung, liver, bone marrow, heart and skin. No expression in thymus, kidney, brain or small intestine.

The protein resides in the cell membrane. Its subcellular location is the secreted. In terms of biological role, macrophage-restricted adhesion molecule that mediates sialic-acid dependent binding to lymphocytes, including granulocytes, monocytes, natural killer cells, B-cells and CD8 T-cells. Plays a crucial role in limiting bacterial dissemination by engaging sialylated bacteria to promote effective phagocytosis and antigen presentation for the adaptive immune response. Mediates the uptake of various enveloped viruses via sialic acid recognition and subsequently induces the formation of intracellular compartments filled with virions (VCCs). In turn, enhances macrophage-to-T-cell transmission of several viruses including murine leukemia virus. Acts as an endocytic receptor mediating clathrin dependent endocytosis. Preferentially binds to alpha-2,3-linked sialic acid. Binds to SPN/CD43 on T-cells. May play a role in hemopoiesis. Plays a role in the inhibition of antiviral innate immune by promoting TBK1 degradation via TYROBP and TRIM27-mediated ubiquitination. The protein is Sialoadhesin (Siglec1) of Mus musculus (Mouse).